Reading from the N-terminus, the 257-residue chain is Glucose-1-phosphate cytidylyltransferase (257 aa).

Substrate-binding positions include 6 to 10 (LAGGL), 11 to 13 (GTR), lysine 23, serine 104, arginine 109, and glycine 128. Mg(2+)-binding residues include aspartate 129 and aspartate 234.

It belongs to the glucose-1-phosphate cytidylyltransferase family. Homohexamer. Requires Mg(2+) as cofactor.

It carries out the reaction alpha-D-glucose 1-phosphate + CTP + H(+) = CDP-D-glucose + diphosphate. It participates in nucleotide-sugar biosynthesis; CDP-3,6-dideoxy-D-mannose biosynthesis; CDP-3,6-dideoxy-D-mannose from CTP and alpha-D-glucose 1-phosphate: step 1/5. The protein operates within bacterial outer membrane biogenesis; LPS O-antigen biosynthesis. Involved in the biosynthesis of the tyvelose, a 3,6-dideoxyhexose found in the O-antigen of the surface lipopolysaccharides. It catalyzes the transfer of a CMP moiety from CTP to glucose 1-phosphate. The sequence is that of Glucose-1-phosphate cytidylyltransferase (rfbF) from Salmonella typhimurium (strain LT2 / SGSC1412 / ATCC 700720).